A 1370-amino-acid chain; its full sequence is DNA-directed RNA polymerase subunit beta (1370 aa).

It belongs to the RNA polymerase beta chain family. As to quaternary structure, the RNAP catalytic core consists of 2 alpha, 1 beta, 1 beta' and 1 omega subunit. When a sigma factor is associated with the core the holoenzyme is formed, which can initiate transcription.

It catalyses the reaction RNA(n) + a ribonucleoside 5'-triphosphate = RNA(n+1) + diphosphate. Its function is as follows. DNA-dependent RNA polymerase catalyzes the transcription of DNA into RNA using the four ribonucleoside triphosphates as substrates. The sequence is that of DNA-directed RNA polymerase subunit beta from Bordetella avium (strain 197N).